A 282-amino-acid polypeptide reads, in one-letter code: Aldo-keto reductase ML1669 (282 aa).

Y57 functions as the Proton donor in the catalytic mechanism. Residues L197, V235, R237, S238, A239, S246, N247, and R273 each contribute to the NADPH site.

The protein belongs to the aldo/keto reductase family.

The protein is Aldo-keto reductase ML1669 of Mycobacterium leprae (strain TN).